We begin with the raw amino-acid sequence, 368 residues long: MWIKELELKHYRNYDHLLASFSSGLNVFIGNNAQGKTNFLEAIYFLSLTRSHRTRADKELIHFDHSTVSLTGKIQRISGTVDLEINLSDKGRVTKINALKQAKLSDYIGTMMVVLFAPEDLQLVKGAPSLRRKFIDIDLGQIKPVYLFELSHYNHVLKQRNSYLKSAQQIDAAFLAVLDEQLASYGARVMEHRIDFINALEKEANTHHQAISNGLESLSLSYQSSVVFDKKTSIYQQFLHQLEKNHQKDFFRKNTSVGPHRDDLAFYINGMNANFASQGQHRSLILSLKMAEVSLMKALTGDNPILLLDDVMSELDNTRQTKLLETVIKENVQTFITTTSLDHLSQLPEGIRIFHVTKGTVQVDSDIH.

An ATP-binding site is contributed by 30–37 (GNNAQGKT).

Belongs to the RecF family.

It is found in the cytoplasm. Its function is as follows. The RecF protein is involved in DNA metabolism; it is required for DNA replication and normal SOS inducibility. RecF binds preferentially to single-stranded, linear DNA. It also seems to bind ATP. The chain is DNA replication and repair protein RecF from Streptococcus pyogenes serotype M4 (strain MGAS10750).